Here is a 391-residue protein sequence, read N- to C-terminus: Nutrient and stress factor 1 (391 aa).

Positions 1-27 (MENTTNRNTAGVLTSSNGNFATNSVAA) are enriched in polar residues. The disordered stretch occupies residues 1-37 (MENTTNRNTAGVLTSSNGNFATNSVAASTPKRSKSAR). 2 consecutive C2H2-type zinc fingers follow at residues 41–66 (FKCTGYDGCTMSFTRAEHLARHIRKH) and 72–95 (FQCPACLKFFSRVDNLKQHRESVH). The interval 91–149 (RESVHAHKNHHSTSSHQRKPSSSSLSSSSSASSSSSASSSTSYSDPYRKTNINSGNMPM) is disordered. Positions 96–109 (AHKNHHSTSSHQRK) are enriched in basic residues. The segment covering 110 to 134 (PSSSSLSSSSSASSSSSASSSTSYS) has biased composition (low complexity). Phosphoserine occurs at positions 162 and 163. Residues 326-374 (AFSQPPNGNKNNNMSSSKNGGKGGENFKNTDDRNDNNNKKRSETLSESD) form a disordered region. Residues 332-344 (NGNKNNNMSSSKN) are compositionally biased toward low complexity. A compositionally biased stretch (basic and acidic residues) spans 353-369 (KNTDDRNDNNNKKRSET).

Its subcellular location is the nucleus. In terms of biological role, transcription factor that participates in the transcriptional activation of glucose-repressed genes during exponential growth in non-fermentable carbon conditions. Also involved in salt-stress response. The sequence is that of Nutrient and stress factor 1 (USV1) from Saccharomyces cerevisiae (strain ATCC 204508 / S288c) (Baker's yeast).